The primary structure comprises 194 residues: MSFISYISFKGIKMNVISDLELQQIRTQMLTFAQLQVNQADLAEDLVQEAFLSAFKNLANFKRQSAFKTWIFAILKNKIIDYLRQKGRFVLESELEDENTNNSFFDEKGHWKPEYHPSELQGEEETVYSDEFWLIFETCLNCLPAKQAKIFMMREFLELSSEEICQETHLTSSNLHTTLYRARLQLQNCLSKKL.

The Polymerase core binding signature appears at 45–58; it reads DLVQEAFLSAFKNL. Residues 161–180 constitute a DNA-binding region (H-T-H motif); sequence SEEICQETHLTSSNLHTTLY.

The protein belongs to the sigma-70 factor family. ECF subfamily.

The sequence is that of Probable RNA polymerase sigma factor HI_1459 from Haemophilus influenzae (strain ATCC 51907 / DSM 11121 / KW20 / Rd).